Reading from the N-terminus, the 348-residue chain is Dihydroorotase (348 aa).

The Zn(2+) site is built by His17 and His19. Residues 19 to 21 (HLR) and Asn45 each bind substrate. Residues Lys103, His140, and His178 each contribute to the Zn(2+) site. N6-carboxylysine is present on Lys103. His140 serves as a coordination point for substrate. A substrate-binding site is contributed by Leu223. Asp251 lines the Zn(2+) pocket. Residue Asp251 is part of the active site. Residues His255 and Ala267 each contribute to the substrate site.

The protein belongs to the metallo-dependent hydrolases superfamily. DHOase family. Class II DHOase subfamily. Homodimer. Zn(2+) is required as a cofactor.

The catalysed reaction is (S)-dihydroorotate + H2O = N-carbamoyl-L-aspartate + H(+). It participates in pyrimidine metabolism; UMP biosynthesis via de novo pathway; (S)-dihydroorotate from bicarbonate: step 3/3. Its function is as follows. Catalyzes the reversible cyclization of carbamoyl aspartate to dihydroorotate. This Escherichia coli O6:H1 (strain CFT073 / ATCC 700928 / UPEC) protein is Dihydroorotase.